We begin with the raw amino-acid sequence, 104 residues long: Pole-localizer protein TmaR (104 aa).

Coiled-coil stretches lie at residues 7 to 34 (IVNQ…NRKR) and 76 to 96 (SAEI…LTEE).

The protein belongs to the pole-localizer TmaR family.

Its subcellular location is the cytoplasm. In terms of biological role, pole-localizer protein involved in the regulation of several cellular processes. The polypeptide is Pole-localizer protein TmaR (Vibrio campbellii (strain ATCC BAA-1116)).